Reading from the N-terminus, the 600-residue chain is Proline--tRNA ligase (600 aa).

This sequence belongs to the class-II aminoacyl-tRNA synthetase family. ProS type 1 subfamily. Homodimer.

The protein resides in the cytoplasm. It catalyses the reaction tRNA(Pro) + L-proline + ATP = L-prolyl-tRNA(Pro) + AMP + diphosphate. Catalyzes the attachment of proline to tRNA(Pro) in a two-step reaction: proline is first activated by ATP to form Pro-AMP and then transferred to the acceptor end of tRNA(Pro). As ProRS can inadvertently accommodate and process non-cognate amino acids such as alanine and cysteine, to avoid such errors it has two additional distinct editing activities against alanine. One activity is designated as 'pretransfer' editing and involves the tRNA(Pro)-independent hydrolysis of activated Ala-AMP. The other activity is designated 'posttransfer' editing and involves deacylation of mischarged Ala-tRNA(Pro). The misacylated Cys-tRNA(Pro) is not edited by ProRS. In Acaryochloris marina (strain MBIC 11017), this protein is Proline--tRNA ligase.